The following is a 268-amino-acid chain: MVSLTTCCLKNIVNQHAHVENTVLLYHLGLRWNCKTLYQCTQCNGVNYTNSHSDQCKNKDLFLMKVIVKKNLAVARTLLSWGASPEYARLFCRNTEEEQALNVQQVADVSSSKILERLTMSYKENDEQLLITFYLLNLSTNFSTNLREQVRFNIVSYIICDLAIHQTFKIFYAKNYSLSTLYCIFLAIYYKRYTALRKMVKIYPGLKPFAYLTGFMFDDERVMETYNSTDDEISECKNRIIAIKGCYGNFHCRSDIDHMYAFSQNNFW.

At M1 to N175 the chain is on the cytoplasmic side. Residues Y176 to Y193 form a helical membrane-spanning segment. Topologically, residues T194–W268 are extracellular.

It belongs to the asfivirus MGF 300 family.

The protein resides in the host membrane. Plays a role in virus cell tropism, and may be required for efficient virus replication in macrophages. This chain is Protein MGF 300-1L, found in African swine fever virus (isolate Tick/South Africa/Pretoriuskop Pr4/1996) (ASFV).